The sequence spans 86 residues: MTLFNSISSISNSTGLSKQSLIVNVDGNTSSSGGNSTSWLGGFDGCGGCGGFGSYGGCRGFGGCGGSNLNIINVDIDIGRRRRRCC.

It belongs to the UPF0512 family.

This is UPF0512 protein V from Dictyostelium discoideum (Social amoeba).